The sequence spans 435 residues: MTGYYQLLGSIVLIGLGGLFAAIDAAISTVSPARVDELVRDQRPGAGSLRKVMADRPRYVNLVVLLRTSCEITATALLVVFIRYHFSMVWGLYLAAGIMVLASFVVVGVGPRTLGRQNAYSISLATALPLRLISWLLMPISRLLVLLGNALTPGRGFRNGPFASEIELREVVDLAQQRGVVAADERRMIESVFELGDTPAREVMVPRTEMIWIESDKTAGQAMTLAVRSGHSRIPVIGENVDDIVGVVYLKDLVEQTFCSTNGGRETTVARVMRPAVFVPDSKPLDALLREMQRDRNHMALLVDEYGAIAGLVSIEDVLEEIVGEIADEYDQAETAPVEDLGDKRFRVSARLPIEDVGELYGVEFDDDLDVDTVGGLLALELGRVPLPGAEVISHGLRLHAEGGTDHRGRVRIGTVLLSPAEPDGADDEEADHPG.

The region spanning M1–E185 is the CNNM transmembrane domain. A run of 2 helical transmembrane segments spans residues L7–I27 and V89–V109. 2 CBS domains span residues M204–T267 and V272–E329.

Belongs to the UPF0053 family.

It is found in the cell membrane. The protein is UPF0053 protein Rv2366c of Mycobacterium tuberculosis (strain ATCC 25618 / H37Rv).